The chain runs to 27 residues: Protamine-A (27 aa).

The tract at residues 1 to 27 is disordered; the sequence is ARRRRRHASTKLKRRRRRRRHGKKSHK.

As to expression, testis.

Its subcellular location is the nucleus. It localises to the chromosome. In terms of biological role, protamines substitute for histones in the chromatin of sperm during the haploid phase of spermatogenesis. They compact sperm DNA into a highly condensed, stable and inactive complex. The protein is Protamine-A of Acipenser stellatus (Sevruga).